Reading from the N-terminus, the 703-residue chain is tRNA 5-methylaminomethyl-2-thiouridine biosynthesis bifunctional protein MnmC (703 aa).

Positions 1 to 281 (MTAKPQKSCQ…KPAALVAKDH (281 aa)) are tRNA (mnm(5)s(2)U34)-methyltransferase. The tract at residues 286-703 (VGGGLASANL…LRKLLKGKAL (418 aa)) is FAD-dependent cmnm(5)s(2)U34 oxidoreductase.

It in the N-terminal section; belongs to the methyltransferase superfamily. tRNA (mnm(5)s(2)U34)-methyltransferase family. This sequence in the C-terminal section; belongs to the DAO family. FAD is required as a cofactor.

It is found in the cytoplasm. It carries out the reaction 5-aminomethyl-2-thiouridine(34) in tRNA + S-adenosyl-L-methionine = 5-methylaminomethyl-2-thiouridine(34) in tRNA + S-adenosyl-L-homocysteine + H(+). Functionally, catalyzes the last two steps in the biosynthesis of 5-methylaminomethyl-2-thiouridine (mnm(5)s(2)U) at the wobble position (U34) in tRNA. Catalyzes the FAD-dependent demodification of cmnm(5)s(2)U34 to nm(5)s(2)U34, followed by the transfer of a methyl group from S-adenosyl-L-methionine to nm(5)s(2)U34, to form mnm(5)s(2)U34. This Shewanella sp. (strain MR-7) protein is tRNA 5-methylaminomethyl-2-thiouridine biosynthesis bifunctional protein MnmC.